The sequence spans 405 residues: Probable succinyl-diaminopimelate desuccinylase (405 aa).

His-72 contributes to the Zn(2+) binding site. Asp-74 is a catalytic residue. Residue Asp-105 participates in Zn(2+) binding. Residue Glu-139 is the Proton acceptor of the active site. Zn(2+) contacts are provided by Glu-140, Glu-165, and His-377.

This sequence belongs to the peptidase M20A family. It depends on Zn(2+) as a cofactor. Co(2+) is required as a cofactor.

It catalyses the reaction N-succinyl-(2S,6S)-2,6-diaminopimelate + H2O = (2S,6S)-2,6-diaminopimelate + succinate. The protein operates within amino-acid biosynthesis; L-lysine biosynthesis via DAP pathway; LL-2,6-diaminopimelate from (S)-tetrahydrodipicolinate (succinylase route): step 3/3. This is Probable succinyl-diaminopimelate desuccinylase (dapE) from Staphylococcus epidermidis (strain ATCC 12228 / FDA PCI 1200).